We begin with the raw amino-acid sequence, 149 residues long: 3-hydroxyacyl-[acyl-carrier-protein] dehydratase FabZ (149 aa).

His53 is an active-site residue.

Belongs to the thioester dehydratase family. FabZ subfamily.

The protein resides in the cytoplasm. The catalysed reaction is a (3R)-hydroxyacyl-[ACP] = a (2E)-enoyl-[ACP] + H2O. Involved in unsaturated fatty acids biosynthesis. Catalyzes the dehydration of short chain beta-hydroxyacyl-ACPs and long chain saturated and unsaturated beta-hydroxyacyl-ACPs. This chain is 3-hydroxyacyl-[acyl-carrier-protein] dehydratase FabZ, found in Neisseria meningitidis serogroup C / serotype 2a (strain ATCC 700532 / DSM 15464 / FAM18).